We begin with the raw amino-acid sequence, 473 residues long: Ion-translocating oxidoreductase complex subunit C (473 aa).

2 4Fe-4S ferredoxin-type domains span residues 328 to 357 and 368 to 396; these read KNES…QQLY and TKKH…VKYF. Residues C337, C340, C343, C347, C376, C379, C382, and C386 each coordinate [4Fe-4S] cluster.

This sequence belongs to the 4Fe4S bacterial-type ferredoxin family. RnfC subfamily. In terms of assembly, the complex is composed of six subunits: RnfA, RnfB, RnfC, RnfD, RnfE and RnfG. The cofactor is [4Fe-4S] cluster.

Its subcellular location is the cell inner membrane. Part of a membrane-bound complex that couples electron transfer with translocation of ions across the membrane. This is Ion-translocating oxidoreductase complex subunit C from Buchnera aphidicola subsp. Acyrthosiphon pisum (strain APS) (Acyrthosiphon pisum symbiotic bacterium).